The chain runs to 483 residues: Adenylyltransferase and sulfurtransferase uba4 (483 aa).

ATP contacts are provided by residues glycine 100, aspartate 121, 128–132, lysine 145, and 178–179; these read SNLHR and DN. Zn(2+) contacts are provided by cysteine 227 and cysteine 230. Cysteine 244 (glycyl thioester intermediate; for adenylyltransferase activity) is an active-site residue. Zn(2+)-binding residues include cysteine 306 and cysteine 309. Positions 366–481 constitute a Rhodanese domain; the sequence is ISKEPTIIDV…WREQIDPDWP (116 aa). The active-site Cysteine persulfide intermediate; for sulfurtransferase activity is cysteine 436.

This sequence in the N-terminal section; belongs to the HesA/MoeB/ThiF family. UBA4 subfamily. Zn(2+) is required as a cofactor.

Its subcellular location is the cytoplasm. The protein resides in the cytosol. The enzyme catalyses [molybdopterin-synthase sulfur-carrier protein]-C-terminal Gly-Gly + ATP + H(+) = [molybdopterin-synthase sulfur-carrier protein]-C-terminal Gly-Gly-AMP + diphosphate. It carries out the reaction [molybdopterin-synthase sulfur-carrier protein]-C-terminal Gly-Gly-AMP + S-sulfanyl-L-cysteinyl-[cysteine desulfurase] + AH2 = [molybdopterin-synthase sulfur-carrier protein]-C-terminal-Gly-aminoethanethioate + L-cysteinyl-[cysteine desulfurase] + A + AMP + 2 H(+). The protein operates within tRNA modification; 5-methoxycarbonylmethyl-2-thiouridine-tRNA biosynthesis. In terms of biological role, plays a central role in 2-thiolation of mcm(5)S(2)U at tRNA wobble positions of cytosolic tRNA(Lys), tRNA(Glu) and tRNA(Gln). Also essential during biosynthesis of the molybdenum cofactor. Acts by mediating the C-terminal thiocarboxylation of sulfur carriers urm1 and mocs2a. Its N-terminus first activates urm1 and mocs2a as acyl-adenylates (-COAMP), then the persulfide sulfur on the catalytic cysteine is transferred to urm1 and mocs2a to form thiocarboxylation (-COSH) of their C-terminus. The reaction probably involves hydrogen sulfide that is generated from the persulfide intermediate and that acts as a nucleophile towards urm1 and mocs2a. Subsequently, a transient disulfide bond is formed. Does not use thiosulfate as sulfur donor; nfs1 probably acting as a sulfur donor for thiocarboxylation reactions. The chain is Adenylyltransferase and sulfurtransferase uba4 from Neosartorya fischeri (strain ATCC 1020 / DSM 3700 / CBS 544.65 / FGSC A1164 / JCM 1740 / NRRL 181 / WB 181) (Aspergillus fischerianus).